A 583-amino-acid chain; its full sequence is Septin-9 (583 aa).

Residue M1 is modified to N-acetylmethionine. A compositionally biased stretch (polar residues) spans 1–14 (MKKSYSGVTRTSSG). Positions 1–49 (MKKSYSGVTRTSSGRLRRLADPTGPALKRSFEVEEIEPPNSTPPRRVQT) are disordered. S30 is modified (phosphoserine). 2 positions are modified to phosphothreonine: T42 and T49. At K62 the chain carries N6-acetyllysine. A disordered region spans residues 79 to 105 (DSLSQRSPKPSLRRVELAGAKAPEPMS). Phosphoserine occurs at positions 82, 85, and 89. The residue at position 143 (T143) is a Phosphothreonine. The interval 166 to 252 (VETPASKIPE…TPSCVGDMAD (87 aa)) is disordered. Polar residues predominate over residues 204-221 (LPSQTLENSEAPMSQLQS). At Y276 the chain carries Phosphotyrosine. Residues 293–565 (QGFEFNIMVV…EAYRVKRLNE (273 aa)) form the Septin-type G domain. The G1 motif stretch occupies residues 303–310 (GQSGLGKS). 303–310 (GQSGLGKS) contributes to the GTP binding site. Residues S325 and S330 each carry the phosphoserine modification. Residues T337, G363, 443–451 (KADTLTLEE), G499, and R514 contribute to the GTP site. The segment at 360–363 (DTPG) is G3 motif. The interval 442–445 (AKAD) is G4 motif.

It belongs to the TRAFAC class TrmE-Era-EngA-EngB-Septin-like GTPase superfamily. Septin GTPase family. In terms of assembly, septins polymerize into heterooligomeric protein complexes that form filaments, and associate with cellular membranes, actin filaments, and microtubules. GTPase activity is required for filament formation. Interacts with SEPTIN2, SEPTIN6, SEPTIN7, SEPTIN11 and SEPTIN14. Interacts with RTKN and ARHGEF18. Expressed in all tissues examined except muscle. Isoforms are differentially expressed in testes, kidney, liver, heart, spleen and brain.

The protein localises to the cytoplasm. Its subcellular location is the cytoskeleton. Filament-forming cytoskeletal GTPase. May play a role in cytokinesis (Potential). The chain is Septin-9 from Mus musculus (Mouse).